The chain runs to 380 residues: Alkaline protease (380 aa).

Positions 1-27 (MKKPLGKIVASTALLISVAFSSSIASA) are cleaved as a signal peptide. Residues 28-112 (AEEAKEKYLI…EEDAEVTTMA (85 aa)) constitute a propeptide that is removed on maturation. Residues 34–111 (KYLIGFNEQE…IEEDAEVTTM (78 aa)) form the Inhibitor I9 domain. Gln113 serves as a coordination point for Ca(2+). Residues 116 to 379 (PWGISRVQAP…SGLVNAEAAT (264 aa)) form the Peptidase S8 domain. The Charge relay system role is filled by Asp143. Asp151 serves as a coordination point for Ca(2+). His173 serves as the catalytic Charge relay system. 7 residues coordinate Ca(2+): Leu184, Asn186, Ile188, Val190, Ala274, Tyr276, and Ala279. The active-site Charge relay system is Ser326.

It belongs to the peptidase S8 family. Requires Ca(2+) as cofactor.

Its subcellular location is the secreted. The sequence is that of Alkaline protease from Alkalihalobacillus alcalophilus (Bacillus alcalophilus).